A 637-amino-acid chain; its full sequence is Sterol 3-beta-glucosyltransferase UGT80A2 (637 aa).

Disordered regions lie at residues 1–29 and 66–112; these read MPEI…RASV and VAES…TERQ. The segment covering 13–24 has biased composition (low complexity); that stretch reads SSSSSSSSSSSS. Over residues 67 to 79 the composition is skewed to polar residues; it reads AESSGTGNKSFSR. A compositionally biased stretch (basic and acidic residues) spans 103 to 112; it reads RLDKSKTERQ.

This sequence belongs to the glycosyltransferase 28 family. Expressed in roots, cauline leaf epidermal cells, stomata, stamen, pollen and around the base of siliques.

It carries out the reaction a sterol + UDP-alpha-D-glucose = a sterol 3-beta-D-glucoside + UDP + H(+). Functionally, involved in the biosynthesis of sterol glucosides. Catalyzes the synthesis of steryl glycosides (SGs) and acyl steryl glycosides (ASGs) which are the most abundant sterol derivatives in higher plants. Can act on several sterols like sitosterol, campesterol and stigmasterol. Both UGT80A2 and UGT80B1 are required for the normal production of SGs and ASGs in seeds. The chain is Sterol 3-beta-glucosyltransferase UGT80A2 (UGT80A2) from Arabidopsis thaliana (Mouse-ear cress).